Consider the following 475-residue polypeptide: Sulfate adenylyltransferase subunit 1 (475 aa).

One can recognise a tr-type G domain in the interval 25 to 239 (KSLLRFLTCG…EVLETVEIQR (215 aa)). The tract at residues 34-41 (GSVDDGKS) is G1. 34–41 (GSVDDGKS) is a GTP binding site. The tract at residues 92 to 96 (GITID) is G2. Residues 113-116 (DTPG) are G3. GTP-binding positions include 113–117 (DTPGH) and 168–171 (NKMD). The G4 stretch occupies residues 168–171 (NKMD). The interval 206–208 (SAL) is G5.

Belongs to the TRAFAC class translation factor GTPase superfamily. Classic translation factor GTPase family. CysN/NodQ subfamily. As to quaternary structure, heterodimer composed of CysD, the smaller subunit, and CysN.

It carries out the reaction sulfate + ATP + H(+) = adenosine 5'-phosphosulfate + diphosphate. Its pathway is sulfur metabolism; hydrogen sulfide biosynthesis; sulfite from sulfate: step 1/3. Functionally, with CysD forms the ATP sulfurylase (ATPS) that catalyzes the adenylation of sulfate producing adenosine 5'-phosphosulfate (APS) and diphosphate, the first enzymatic step in sulfur assimilation pathway. APS synthesis involves the formation of a high-energy phosphoric-sulfuric acid anhydride bond driven by GTP hydrolysis by CysN coupled to ATP hydrolysis by CysD. In Escherichia coli O127:H6 (strain E2348/69 / EPEC), this protein is Sulfate adenylyltransferase subunit 1.